Consider the following 511-residue polypeptide: Exodeoxyribonuclease 7 large subunit (511 aa).

Belongs to the XseA family. Heterooligomer composed of large and small subunits.

The protein resides in the cytoplasm. It carries out the reaction Exonucleolytic cleavage in either 5'- to 3'- or 3'- to 5'-direction to yield nucleoside 5'-phosphates.. Functionally, bidirectionally degrades single-stranded DNA into large acid-insoluble oligonucleotides, which are then degraded further into small acid-soluble oligonucleotides. The sequence is that of Exodeoxyribonuclease 7 large subunit from Brucella abortus (strain S19).